Consider the following 954-residue polypeptide: SWI/SNF-related matrix-associated actin-dependent regulator of chromatin subfamily A-like protein 1 (954 aa).

2 disordered regions span residues 1-20 and 27-238; these read MSLPLTEEQRKKIEENRQKA and KLLA…NSQK. An N-acetylserine modification is found at Ser-2. A coiled-coil region spans residues 3–34; it reads LPLTEEQRKKIEENRQKALARRAEKLLAEQHQ. The mediates interaction with RPA2 stretch occupies residues 5 to 30; that stretch reads LTEEQRKKIEENRQKALARRAEKLLA. Positions 7–20 are enriched in basic and acidic residues; the sequence is EEQRKKIEENRQKA. The span at 72 to 83 shows a compositional bias: polar residues; it reads KQQNLSSSSNAD. 4 positions are modified to phosphoserine: Ser-112, Ser-123, Ser-129, and Ser-151. Polar residues-rich tracts occupy residues 171–183 and 197–238; these read KSSQETPAHSSGQ and ASPS…NSQK. Residue Ser-198 is modified to Phosphoserine. 2 consecutive HARP domains span residues 226-303 and 327-398; these read SGSS…QPLE and SLSF…DPLP. Residues 445 to 600 form the Helicase ATP-binding domain; the sequence is NFAIAKGGRL…YTQIIAVKPT (156 aa). 458-465 contributes to the ATP binding site; it reads DDMGLGKT. A DESH box motif is present at residues 549–552; the sequence is DESH. Positions 644 to 661 match the Nuclear localization signal motif; the sequence is RRLKSDVLSQLPAKQRKI. Residues 716–869 enclose the Helicase C-terminal domain; the sequence is YILDLLESGR…ETNFSEMTES (154 aa). Positions 904–934 are disordered; the sequence is ESFDPGSASGTSGSSSQNMGDTLDESSLTAS. Residues 909–919 show a composition bias toward low complexity; that stretch reads GSASGTSGSSS. Positions 920–934 are enriched in polar residues; it reads QNMGDTLDESSLTAS.

Belongs to the SNF2/RAD54 helicase family. SMARCAL1 subfamily. As to quaternary structure, interacts with RPA2; the interaction is direct and mediates the recruitment by the RPA complex of SMARCAL1 to sites of DNA damage. DNA damage-regulated phosphorylation by kinases that may include ATM, ATR and PRKDC. Ubiquitously expressed, with high levels in testis.

It is found in the nucleus. The catalysed reaction is ATP + H2O = ADP + phosphate + H(+). Functionally, ATP-dependent annealing helicase that binds selectively to fork DNA relative to ssDNA or dsDNA and catalyzes the rewinding of the stably unwound DNA. Rewinds single-stranded DNA bubbles that are stably bound by replication protein A (RPA). Acts throughout the genome to reanneal stably unwound DNA, performing the opposite reaction of many enzymes, such as helicases and polymerases, that unwind DNA. May play an important role in DNA damage response by acting at stalled replication forks. The chain is SWI/SNF-related matrix-associated actin-dependent regulator of chromatin subfamily A-like protein 1 from Homo sapiens (Human).